Reading from the N-terminus, the 764-residue chain is FAST kinase domain-containing protein 5, mitochondrial (764 aa).

A Phosphoserine modification is found at Ser-95. N6-acetyllysine is present on Lys-507. One can recognise an RAP domain in the interval 697–757 (LAIQFTNRNQ…RLEKLAFLHE (61 aa)).

This sequence belongs to the FAST kinase family. In terms of assembly, found in a complex with GRSF1, DDX28, DHX30 and FASTKD2. Associates with the 12S mitochondrial rRNA (12S mt-rRNA).

Its subcellular location is the mitochondrion matrix. It is found in the mitochondrion nucleoid. Plays an important role in the processing of non-canonical mitochondrial mRNA precursors. This Macaca fascicularis (Crab-eating macaque) protein is FAST kinase domain-containing protein 5, mitochondrial (FASTKD5).